The following is a 646-amino-acid chain: Long-chain fatty acid transport protein 1 (646 aa).

Residues 1–13 lie on the Extracellular side of the membrane; the sequence is MRAPGAGAASVVS. The helical transmembrane segment at 14-34 threads the bilayer; the sequence is LALLWLLGLPWTWSAAAALGV. Residues 35-646 are Cytoplasmic-facing; sequence YVGSGGWRFL…TRICSGAFAL (612 aa). The tract at residues 191–475 is sufficient for oligomerization; sequence EVSGHLGKSL…YVSESATSKK (285 aa). 246–257 lines the AMP pocket; sequence YIYTSGTTGLPK.

This sequence belongs to the ATP-dependent AMP-binding enzyme family. Self-associates. May function as a homodimer. Interacts with EPRS1; mediates the translocation of SLC27A1 from the cytoplasm to the plasma membrane thereby increasing the uptake of long-chain fatty acids. Interacts with DGAT2 and this interaction is enhanced in the presence of ZFYVE1. Highest levels of expression are detected in muscle and adipose tissue small, intermediate levels in small intestine, and barely detectable in liver. Expressed in brain gray matter.

The protein localises to the cell membrane. It localises to the endomembrane system. Its subcellular location is the cytoplasm. The enzyme catalyses a fatty acid(in) = a fatty acid(out). The catalysed reaction is (9Z)-octadecenoate(out) = (9Z)-octadecenoate(in). It carries out the reaction hexadecanoate(out) = hexadecanoate(in). It catalyses the reaction (9Z,12Z)-octadecadienoate(out) = (9Z,12Z)-octadecadienoate(in). The enzyme catalyses (5Z,8Z,11Z,14Z)-eicosatetraenoate(out) = (5Z,8Z,11Z,14Z)-eicosatetraenoate(in). The catalysed reaction is a long-chain fatty acid + ATP + CoA = a long-chain fatty acyl-CoA + AMP + diphosphate. It carries out the reaction (5Z,8Z,11Z,14Z)-eicosatetraenoate + ATP + CoA = (5Z,8Z,11Z,14Z)-eicosatetraenoyl-CoA + AMP + diphosphate. It catalyses the reaction a very long-chain fatty acid + ATP + CoA = a very long-chain fatty acyl-CoA + AMP + diphosphate. The enzyme catalyses tetracosanoate + ATP + CoA = tetracosanoyl-CoA + AMP + diphosphate. Inhibited by Triacsin C. Its function is as follows. Mediates the import of long-chain fatty acids (LCFA) into the cell by facilitating their transport at the plasma membrane. Also functions as an acyl-CoA ligase catalyzing the ATP-dependent formation of fatty acyl-CoA using LCFA and very-long-chain fatty acids (VLCFA) as substrates, which prevents fatty acid efflux from cells and might drive more fatty acid uptake. May act directly as a bona fide transporter, or alternatively, in a cytoplasmic or membrane-associated multimeric protein complex to trap and draw fatty acids towards accumulation. Plays a pivotal role in regulating available LCFA substrates from exogenous sources in tissues undergoing high levels of beta-oxidation or triglyceride synthesis. May be involved in regulation of cholesterol metabolism. Probably involved in fatty acid transport across the blood barrier. The sequence is that of Long-chain fatty acid transport protein 1 from Homo sapiens (Human).